A 182-amino-acid polypeptide reads, in one-letter code: UPF0149 protein CGSHiGG_07585 (182 aa).

It belongs to the UPF0149 family.

The polypeptide is UPF0149 protein CGSHiGG_07585 (Haemophilus influenzae (strain PittGG)).